A 226-amino-acid chain; its full sequence is Ribonuclease 3 (226 aa).

Positions 4 to 127 constitute an RNase III domain; that stretch reads LEEFEKKLGY…VMGAIYLEKG (124 aa). Mg(2+) is bound at residue E40. The active site involves D44. Residues N113 and E116 each coordinate Mg(2+). The active site involves E116. The region spanning 154–223 is the DRBM domain; the sequence is DFKTALQEFT…AKEALKILKA (70 aa).

This sequence belongs to the ribonuclease III family. In terms of assembly, homodimer. It depends on Mg(2+) as a cofactor.

It is found in the cytoplasm. It carries out the reaction Endonucleolytic cleavage to 5'-phosphomonoester.. Functionally, digests double-stranded RNA. Involved in the processing of primary rRNA transcript to yield the immediate precursors to the large and small rRNAs (23S and 16S). Processes some mRNAs, and tRNAs when they are encoded in the rRNA operon. Processes pre-crRNA and tracrRNA of type II CRISPR loci if present in the organism. This Nitratiruptor sp. (strain SB155-2) protein is Ribonuclease 3.